The sequence spans 467 residues: Light-independent protochlorophyllide reductase subunit N (467 aa).

[4Fe-4S] cluster is bound by residues cysteine 23, cysteine 48, and cysteine 108.

The protein belongs to the BchN/ChlN family. In terms of assembly, protochlorophyllide reductase is composed of three subunits; ChlL, ChlN and ChlB. Forms a heterotetramer of two ChlB and two ChlN subunits. The cofactor is [4Fe-4S] cluster.

It carries out the reaction chlorophyllide a + oxidized 2[4Fe-4S]-[ferredoxin] + 2 ADP + 2 phosphate = protochlorophyllide a + reduced 2[4Fe-4S]-[ferredoxin] + 2 ATP + 2 H2O. The protein operates within porphyrin-containing compound metabolism; chlorophyll biosynthesis (light-independent). Component of the dark-operative protochlorophyllide reductase (DPOR) that uses Mg-ATP and reduced ferredoxin to reduce ring D of protochlorophyllide (Pchlide) to form chlorophyllide a (Chlide). This reaction is light-independent. The NB-protein (ChlN-ChlB) is the catalytic component of the complex. The chain is Light-independent protochlorophyllide reductase subunit N from Trichormus variabilis (strain ATCC 29413 / PCC 7937) (Anabaena variabilis).